Reading from the N-terminus, the 224-residue chain is Phosphoglycolate phosphatase (224 aa).

D11 functions as the Nucleophile in the catalytic mechanism. Mg(2+)-binding residues include D11, D13, and D177.

The protein belongs to the HAD-like hydrolase superfamily. CbbY/CbbZ/Gph/YieH family. Mg(2+) serves as cofactor.

It carries out the reaction 2-phosphoglycolate + H2O = glycolate + phosphate. It participates in organic acid metabolism; glycolate biosynthesis; glycolate from 2-phosphoglycolate: step 1/1. Its function is as follows. Specifically catalyzes the dephosphorylation of 2-phosphoglycolate. Is involved in the dissimilation of the intracellular 2-phosphoglycolate formed during the DNA repair of 3'-phosphoglycolate ends, a major class of DNA lesions induced by oxidative stress. This is Phosphoglycolate phosphatase from Mannheimia succiniciproducens (strain KCTC 0769BP / MBEL55E).